A 458-amino-acid chain; its full sequence is Argininosuccinate lyase (458 aa).

This sequence belongs to the lyase 1 family. Argininosuccinate lyase subfamily.

It is found in the cytoplasm. It catalyses the reaction 2-(N(omega)-L-arginino)succinate = fumarate + L-arginine. It functions in the pathway amino-acid biosynthesis; L-arginine biosynthesis; L-arginine from L-ornithine and carbamoyl phosphate: step 3/3. In Salmonella schwarzengrund (strain CVM19633), this protein is Argininosuccinate lyase.